Here is a 460-residue protein sequence, read N- to C-terminus: A-type ATP synthase subunit B 1 (460 aa).

It belongs to the ATPase alpha/beta chains family. In terms of assembly, has multiple subunits with at least A(3), B(3), C, D, E, F, H, I and proteolipid K(x).

It is found in the cell membrane. In terms of biological role, component of the A-type ATP synthase that produces ATP from ADP in the presence of a proton gradient across the membrane. The B chain is a regulatory subunit. This chain is A-type ATP synthase subunit B 1, found in Methanospirillum hungatei JF-1 (strain ATCC 27890 / DSM 864 / NBRC 100397 / JF-1).